The primary structure comprises 452 residues: Mitochondrial import inner membrane translocase subunit TIM44 (452 aa).

T128 carries the phosphothreonine modification. Residue 166-173 (GGEKLGRT) participates in ATP binding. S180 bears the Phosphoserine mark. Residue K217 is modified to N6-succinyllysine.

The protein belongs to the Tim44 family. As to quaternary structure, probable component of the PAM complex at least composed of a mitochondrial HSP70 protein, GRPEL1 or GRPEL2, TIMM44, TIMM16/PAM16 and TIMM14/DNAJC19. The complex interacts with the TIMM23 component of the TIM23 complex. Interacts with SLC25A4/ANT1 and SLC25A5/ANT2; leading to inhibit the presequence translocase TIMM23, thereby promoting stabilization of PINK1.

The protein localises to the mitochondrion inner membrane. Its subcellular location is the mitochondrion matrix. Its function is as follows. Essential component of the PAM complex, a complex required for the translocation of transit peptide-containing proteins from the inner membrane into the mitochondrial matrix in an ATP-dependent manner. Recruits mitochondrial HSP70 to drive protein translocation into the matrix using ATP as an energy source. This is Mitochondrial import inner membrane translocase subunit TIM44 (TIMM44) from Homo sapiens (Human).